The primary structure comprises 345 residues: Ribonucleoside-diphosphate reductase small chain 2 (345 aa).

Position 1 is an N-acetylmethionine (Met-1). Residue Tyr-131 is part of the active site. Phosphoserine is present on residues Ser-169 and Ser-332. Thr-334 is subject to Phosphothreonine. Ser-336 carries the phosphoserine modification. Lys-337 participates in a covalent cross-link: Glycyl lysine isopeptide (Lys-Gly) (interchain with G-Cter in ubiquitin).

Belongs to the ribonucleoside diphosphate reductase small chain family. In terms of assembly, heterotetramer of two large (R1) and two small (R2) subunits. S.cerevisiae has two different R1 subunits (RNR1 and RNR3) and two different R2 subunits (RNR2 and RNR4). The functional form of the small subunits is a RNR2-RNR4 heterodimer, where RNR2 provides the iron-radical center and RNR4 is required for proper folding of RNR2 and assembly with the large subunits. Under normal growth conditions, the active form of the large subunits is a homodimer of the constitutively expressed RNR1. In damaged cells or cells arrested for DNA synthesis, the reductase consists of multiple species because of the association of the small subunits (RNR2-RNR4) with either the RNR1 homodimer or a heterodimer of RNR1 and the damage-inducible RNR3. Interacts with DIF1.

It localises to the nucleus. It catalyses the reaction a 2'-deoxyribonucleoside 5'-diphosphate + [thioredoxin]-disulfide + H2O = a ribonucleoside 5'-diphosphate + [thioredoxin]-dithiol. Its function is as follows. Provides the precursors necessary for DNA synthesis. Catalyzes the biosynthesis of deoxyribonucleotides from the corresponding ribonucleotides. RNR4 is required for proper folding of RNR2 and assembly with the large subunits. In Saccharomyces cerevisiae (strain ATCC 204508 / S288c) (Baker's yeast), this protein is Ribonucleoside-diphosphate reductase small chain 2 (RNR4).